A 338-amino-acid polypeptide reads, in one-letter code: Glyceraldehyde-3-phosphate dehydrogenase (338 aa).

Residues Arg-12–Ile-13, Asp-34, and Arg-79 contribute to the NAD(+) site. D-glyceraldehyde 3-phosphate contacts are provided by residues Ser-150–Thr-152, Thr-181, Thr-210–Gly-211, and Arg-233. Cys-151 functions as the Nucleophile in the catalytic mechanism. An NAD(+)-binding site is contributed by Asn-315.

The protein belongs to the glyceraldehyde-3-phosphate dehydrogenase family. In terms of assembly, homotetramer.

It localises to the cytoplasm. It carries out the reaction D-glyceraldehyde 3-phosphate + phosphate + NAD(+) = (2R)-3-phospho-glyceroyl phosphate + NADH + H(+). The protein operates within carbohydrate degradation; glycolysis; pyruvate from D-glyceraldehyde 3-phosphate: step 1/5. The sequence is that of Glyceraldehyde-3-phosphate dehydrogenase (gpd1) from Hypocrea atroviridis (Trichoderma atroviride).